The chain runs to 102 residues: Class II hydrophobin 3 (102 aa).

A signal peptide spans 1 to 16 (MQFLAVAALLFTTALA). Cystine bridges form between Cys33–Cys83, Cys44–Cys74, Cys45–Cys57, and Cys84–Cys95.

It belongs to the cerato-ulmin hydrophobin family. In terms of assembly, homotetramer. Further self-assembles to form highly ordered films at water-air interfaces through intermolecular interactions. As to expression, expressed in the conidia, vegetative growth and induction growth stages.

The protein localises to the secreted. It localises to the cell wall. The protein resides in the cytoplasm. In terms of biological role, aerial growth, conidiation, and dispersal of filamentous fungi in the environment rely upon a capability of their secreting small amphipathic proteins called hydrophobins (HPBs) with low sequence identity. Class I can self-assemble into an outermost layer of rodlet bundles on aerial cell surfaces, conferring cellular hydrophobicity that supports fungal growth, development and dispersal; whereas Class II form highly ordered films at water-air interfaces through intermolecular interactions but contribute nothing to the rodlet structure. Hbf3 is a class II hydrophobin that has a role in vegetative growth and asexual development. This Hypocrea jecorina (strain QM6a) (Trichoderma reesei) protein is Class II hydrophobin 3.